Consider the following 393-residue polypeptide: 4-hydroxyphenylpyruvate dioxygenase (393 aa).

Thr2 carries the post-translational modification N-acetylthreonine. 2 VOC domains span residues 18-149 (HFHS…LVEK) and 180-338 (IIDH…IFTK). Lys132 is modified (N6-succinyllysine). Residue His183 participates in Fe cation binding. 3 positions are modified to phosphoserine: Ser211, Ser226, and Ser250. Fe cation is bound by residues His266 and Glu349.

The protein belongs to the 4HPPD family. In terms of assembly, homodimer. The cofactor is Fe cation.

The protein localises to the cytoplasm. The protein resides in the endoplasmic reticulum membrane. It is found in the golgi apparatus membrane. The catalysed reaction is 3-(4-hydroxyphenyl)pyruvate + O2 = homogentisate + CO2. Its pathway is amino-acid degradation; L-phenylalanine degradation; acetoacetate and fumarate from L-phenylalanine: step 3/6. In terms of biological role, catalyzes the conversion of 4-hydroxyphenylpyruvic acid to homogentisic acid, one of the steps in tyrosine catabolism. This chain is 4-hydroxyphenylpyruvate dioxygenase (HPD), found in Bos taurus (Bovine).